The sequence spans 229 residues: Ribonuclease T (229 aa).

One can recognise an Exonuclease domain in the interval 23–197; it reads VIIDVETAGF…YDTERTAKLF (175 aa). Mg(2+) contacts are provided by D26, E28, H184, and D189. H184 functions as the Proton donor/acceptor in the catalytic mechanism.

Belongs to the RNase T family. In terms of assembly, homodimer. It depends on Mg(2+) as a cofactor.

Functionally, trims short 3' overhangs of a variety of RNA species, leaving a one or two nucleotide 3' overhang. Responsible for the end-turnover of tRNA: specifically removes the terminal AMP residue from uncharged tRNA (tRNA-C-C-A). Also appears to be involved in tRNA biosynthesis. The chain is Ribonuclease T from Haemophilus influenzae (strain ATCC 51907 / DSM 11121 / KW20 / Rd).